The sequence spans 320 residues: Lipoyl synthase (320 aa).

The [4Fe-4S] cluster site is built by C67, C72, C78, C93, C97, C100, and S307. Residues 79 to 296 (FNHGTATFMI…GVIAKEIGFT (218 aa)) enclose the Radical SAM core domain.

Belongs to the radical SAM superfamily. Lipoyl synthase family. Requires [4Fe-4S] cluster as cofactor.

Its subcellular location is the cytoplasm. It catalyses the reaction [[Fe-S] cluster scaffold protein carrying a second [4Fe-4S](2+) cluster] + N(6)-octanoyl-L-lysyl-[protein] + 2 oxidized [2Fe-2S]-[ferredoxin] + 2 S-adenosyl-L-methionine + 4 H(+) = [[Fe-S] cluster scaffold protein] + N(6)-[(R)-dihydrolipoyl]-L-lysyl-[protein] + 4 Fe(3+) + 2 hydrogen sulfide + 2 5'-deoxyadenosine + 2 L-methionine + 2 reduced [2Fe-2S]-[ferredoxin]. The protein operates within protein modification; protein lipoylation via endogenous pathway; protein N(6)-(lipoyl)lysine from octanoyl-[acyl-carrier-protein]: step 2/2. Its function is as follows. Catalyzes the radical-mediated insertion of two sulfur atoms into the C-6 and C-8 positions of the octanoyl moiety bound to the lipoyl domains of lipoate-dependent enzymes, thereby converting the octanoylated domains into lipoylated derivatives. This chain is Lipoyl synthase, found in Pseudoalteromonas atlantica (strain T6c / ATCC BAA-1087).